The chain runs to 531 residues: Keratin, type II cytoskeletal 79 (531 aa).

Residues 1–12 (MRSSLSRQTFST) are compositionally biased toward polar residues. Residues 1–55 (MRSSLSRQTFSTKGGFSSNSASGGGGSRMRTSYSSVTMSRGSGGGGGVRSGSSSG) form a disordered region. Residues 1 to 138 (MRSSLSRQTF…DPEIQRVRTQ (138 aa)) are head. A compositionally biased stretch (low complexity) spans 28-40 (RMRTSYSSVTMSR). Gly residues predominate over residues 41–55 (GSGGGGGVRSGSSSG). The segment at 139-174 (EREQIKTLNNKFASFIDKVRFLEQQNKVLETKWALL) is coil 1A. One can recognise an IF rod domain in the interval 139-453 (EREQIKTLNN…KLLESEESRM (315 aa)). The tract at residues 175–194 (QEQSQNTGVARSLEPFFENY) is linker 1. Positions 195-286 (LSTLRRQLDT…QLFEMELSQV (92 aa)) are coil 1B. Positions 287–310 (QTNVSDTNVILSMDNNRNLDLDSI) are linker 12. Residues 311 to 449 (IAEVKAQYEL…ATYRKLLESE (139 aa)) are coil 2. Residues 450–531 (ESRMSGDCPS…TTVKTSSRRY (82 aa)) are tail.

It belongs to the intermediate filament family. As to quaternary structure, heterotetramer of two type I and two type II keratins.

The protein is Keratin, type II cytoskeletal 79 (Krt79) of Mus musculus (Mouse).